A 1777-amino-acid polypeptide reads, in one-letter code: Fatty acid synthase subunit alpha (1777 aa).

A disordered region spans residues alanine 101 to proline 124. Low complexity predominate over residues proline 110–alanine 120. The region spanning leucine 151–leucine 237 is the Carrier domain. Serine 186 is subject to O-(pantetheine 4'-phosphoryl)serine. Residues phenylalanine 563 to leucine 803 are ketoreductase (KR) domain. Residues lysine 1007–alanine 1539 enclose the Ketosynthase family 3 (KS3) domain. Active-site for beta-ketoacyl synthase activity residues include cysteine 1193, histidine 1424, and histidine 1465. Aspartate 1661 is a binding site for Mg(2+). Acetyl-CoA contacts are provided by residues aspartate 1661–glutamate 1663, glutamate 1706–serine 1716, serine 1730–glutamine 1734, and isoleucine 1760–histidine 1762.

This sequence belongs to the thiolase-like superfamily. Fungal fatty acid synthetase subunit alpha family. Fatty acid synthase is composed of alpha and beta subunits.

The catalysed reaction is acetyl-CoA + n malonyl-CoA + 2n NADPH + 4n H(+) = a long-chain-acyl-CoA + n CoA + n CO2 + 2n NADP(+).. It catalyses the reaction a fatty acyl-[ACP] + malonyl-[ACP] + H(+) = a 3-oxoacyl-[ACP] + holo-[ACP] + CO2. It carries out the reaction a (3R)-hydroxyacyl-[ACP] + NADP(+) = a 3-oxoacyl-[ACP] + NADPH + H(+). It participates in secondary metabolite biosynthesis. Functionally, fatty acid synthase alpha subunit; part of the gene cluster that mediates the biosynthesis of oryzines, natural products with an unusual maleidride backbone. The two subunits of the fungal fatty acid synthase oryfasA and oryfasB probably form octenoic acid. This fatty acid is most likely activated by the acyl-CoA ligase oryP to give octenyl-CoA before the citrate synthase-like protein oryE catalyzes condensation with oxaloacetate to form tricarboxylic acid. The next steps of the pathways are conjectural, but a favorite possible route has been proposed, beginning with decarboxylation and concomitant dehydration by the decarboxylase oryM, followed by tautomerization, which may lead to the production of a diene intermediate. Reduction of this diene intermediate could give the known metabolite piliformic acid. On the pathway to oryzine B and oryzine A, however, hydroxylation of the diene by the alpha-ketoglutarate-dependent dioxygenase oryG and lactonisation by the lactonohydrolases oryH or oryL could give oryzine B directly. Finally, enoyl reduction by the dehydrogenase oryD would then convert oryzine B into oryzine A. This Aspergillus oryzae (strain ATCC 42149 / RIB 40) (Yellow koji mold) protein is Fatty acid synthase subunit alpha.